The chain runs to 297 residues: Ribosomal RNA small subunit methyltransferase A (297 aa).

S-adenosyl-L-methionine contacts are provided by asparagine 31, leucine 33, glycine 58, glutamate 79, aspartate 104, and asparagine 129.

This sequence belongs to the class I-like SAM-binding methyltransferase superfamily. rRNA adenine N(6)-methyltransferase family. RsmA subfamily.

It localises to the cytoplasm. The catalysed reaction is adenosine(1518)/adenosine(1519) in 16S rRNA + 4 S-adenosyl-L-methionine = N(6)-dimethyladenosine(1518)/N(6)-dimethyladenosine(1519) in 16S rRNA + 4 S-adenosyl-L-homocysteine + 4 H(+). In terms of biological role, specifically dimethylates two adjacent adenosines (A1518 and A1519) in the loop of a conserved hairpin near the 3'-end of 16S rRNA in the 30S particle. May play a critical role in biogenesis of 30S subunits. This is Ribosomal RNA small subunit methyltransferase A from Staphylococcus aureus (strain Mu3 / ATCC 700698).